A 183-amino-acid chain; its full sequence is uncharacterized protein (183 aa).

The Macro domain maps to 1 to 182 (MFRVVHGDIT…VALKVLERDE (182 aa)).

This is an uncharacterized protein from Pyrococcus abyssi (strain GE5 / Orsay).